The following is a 212-amino-acid chain: ER lumen protein-retaining receptor 1 (212 aa).

Residues 1–4 lie on the Lumenal side of the membrane; that stretch reads MNIF. The chain crosses the membrane as a helical span at residues 5–24; sequence RFLGDISHLSAILILLLKIW. At 25–32 the chain is on the cytoplasmic side; it reads KSRSCAGI. The chain crosses the membrane as a helical span at residues 33–52; that stretch reads SGKSQLLFAIVFTTRYLDLF. The interval 47–48 is interaction with the K-D-E-L motif on target proteins; it reads RY. At 53–58 the chain is on the lumenal side; the sequence is TNFISL. Residues 59–79 form a helical membrane-spanning segment; it reads YNTSMKMVYVASSYATIWMIY. The Cytoplasmic segment spans residues 80-92; that stretch reads SKFKATYDGNHDT. Residues 93 to 110 form a helical membrane-spanning segment; the sequence is FRVEFLIVPTAILAFLVN. The Lumenal segment spans residues 111–116; it reads HDFTPL. A helical transmembrane segment spans residues 117–135; sequence EILWTFSIYLESVAILPQL. The Cytoplasmic segment spans residues 136-149; the sequence is FMVSKTGEAETITS. The helical transmembrane segment at 150–168 threads the bilayer; it reads HYLFALGIYRALYLFNWIW. Residues 159-169 form an interaction with the K-D-E-L motif on target proteins region; the sequence is RALYLFNWIWR. Residues 169 to 178 lie on the Lumenal side of the membrane; sequence RYQFEGFFDL. Residues 179–199 form a helical membrane-spanning segment; it reads IAIVAGLVQTVLYCDFFYLYI. Topologically, residues 200 to 212 are cytoplasmic; that stretch reads TKVLKGKKLSLPA. The tract at residues 204-207 is important for recycling of cargo proteins with the sequence motif K-D-E-L from the Golgi to the endoplasmic reticulum; it reads KGKK.

The protein belongs to the ERD2 family.

The protein resides in the golgi apparatus membrane. It localises to the cytoplasmic vesicle. It is found in the COPI-coated vesicle membrane. The protein localises to the endoplasmic reticulum membrane. Its subcellular location is the endoplasmic reticulum-Golgi intermediate compartment membrane. Its function is as follows. Receptor for the C-terminal sequence motif K-D-E-L that is present on endoplasmic reticulum resident proteins and that mediates their recycling from the Golgi back to the endoplasmic reticulum. The polypeptide is ER lumen protein-retaining receptor 1 (kdelr1) (Xenopus tropicalis (Western clawed frog)).